The chain runs to 177 residues: Large ribosomal subunit protein uL30 (177 aa).

This sequence belongs to the universal ribosomal protein uL30 family. In terms of assembly, part of the 50S ribosomal subunit.

The polypeptide is Large ribosomal subunit protein uL30 (Pyrobaculum islandicum (strain DSM 4184 / JCM 9189 / GEO3)).